Consider the following 419-residue polypeptide: Multiple organellar RNA editing factor 1, mitochondrial (419 aa).

The N-terminal 60 residues, 1–60, are a transit peptide targeting the mitochondrion; sequence MAMISHRLRRALLTATSYVNRSISSSITPASDFPSVSAAVLKRSVIGRSTEVATRAPARL. Residues 174–401 are disordered; it reads KEYGGDKYEN…AGQPGSDQVR (228 aa). Positions 237-252 are enriched in low complexity; that stretch reads GPQQGYATPGQGQGTQ. Positions 310 to 327 are enriched in gly residues; that stretch reads GQGGSGNYSQGPQGGYNQ. A compositionally biased stretch (low complexity) spans 342–356; sequence GPASGAGNLGPAPGA. Residues 357–367 are compositionally biased toward gly residues; sequence GNPGYGQGYSG. The segment covering 371–401 has biased composition (polar residues); that stretch reads EQNQTFPQADQRNRDWNNNNPAGQPGSDQVR.

It belongs to the MORF family. Homodimer and heterodimer with MORF3. Heterodimers with MORF8/RIP1, MORF4/RIP4 and MORF6/RIP6. Interacts with PCMP-E90/MEF13. Interacts with PCMP-H13/MEF35.

The protein resides in the mitochondrion. Its function is as follows. Involved in organellar RNA editing. Required for the processing of numerous RNA editing sites in mitochondria. Binds to the mitochondrial MEF19 and MEF21 factors, two pentatricopeptide repeat-containing proteins involved in RNA editing. The sequence is that of Multiple organellar RNA editing factor 1, mitochondrial from Arabidopsis thaliana (Mouse-ear cress).